Consider the following 344-residue polypeptide: Holliday junction branch migration complex subunit RuvB (344 aa).

The segment at 1-182 is large ATPase domain (RuvB-L); that stretch reads MRIELLNTPP…FGINSRFDYY (182 aa). Residues I21, R22, G63, K66, T67, T68, 129 to 131, R172, Y182, and R219 contribute to the ATP site; that span reads EDF. Mg(2+) is bound at residue T67. Positions 183-253 are small ATPAse domain (RuvB-S); the sequence is APELLEGIIR…IAMKTLDCLE (71 aa). The segment at 256 to 344 is head domain (RuvB-H); it reads EEGLDDMDKK…ISLFDAQPTS (89 aa). R311 and R316 together coordinate DNA.

The protein belongs to the RuvB family. In terms of assembly, homohexamer. Forms an RuvA(8)-RuvB(12)-Holliday junction (HJ) complex. HJ DNA is sandwiched between 2 RuvA tetramers; dsDNA enters through RuvA and exits via RuvB. An RuvB hexamer assembles on each DNA strand where it exits the tetramer. Each RuvB hexamer is contacted by two RuvA subunits (via domain III) on 2 adjacent RuvB subunits; this complex drives branch migration. In the full resolvosome a probable DNA-RuvA(4)-RuvB(12)-RuvC(2) complex forms which resolves the HJ.

It localises to the cytoplasm. The catalysed reaction is ATP + H2O = ADP + phosphate + H(+). The RuvA-RuvB-RuvC complex processes Holliday junction (HJ) DNA during genetic recombination and DNA repair, while the RuvA-RuvB complex plays an important role in the rescue of blocked DNA replication forks via replication fork reversal (RFR). RuvA specifically binds to HJ cruciform DNA, conferring on it an open structure. The RuvB hexamer acts as an ATP-dependent pump, pulling dsDNA into and through the RuvAB complex. RuvB forms 2 homohexamers on either side of HJ DNA bound by 1 or 2 RuvA tetramers; 4 subunits per hexamer contact DNA at a time. Coordinated motions by a converter formed by DNA-disengaged RuvB subunits stimulates ATP hydrolysis and nucleotide exchange. Immobilization of the converter enables RuvB to convert the ATP-contained energy into a lever motion, pulling 2 nucleotides of DNA out of the RuvA tetramer per ATP hydrolyzed, thus driving DNA branch migration. The RuvB motors rotate together with the DNA substrate, which together with the progressing nucleotide cycle form the mechanistic basis for DNA recombination by continuous HJ branch migration. Branch migration allows RuvC to scan DNA until it finds its consensus sequence, where it cleaves and resolves cruciform DNA. The polypeptide is Holliday junction branch migration complex subunit RuvB (Pelodictyon phaeoclathratiforme (strain DSM 5477 / BU-1)).